A 122-amino-acid polypeptide reads, in one-letter code: Aspartate 1-decarboxylase (122 aa).

The active-site Schiff-base intermediate with substrate; via pyruvic acid is the serine 25. Serine 25 bears the Pyruvic acid (Ser) mark. Threonine 57 lines the substrate pocket. Residue tyrosine 58 is the Proton donor of the active site. Residue glycine 73–alanine 75 coordinates substrate.

It belongs to the PanD family. In terms of assembly, heterooctamer of four alpha and four beta subunits. Pyruvate serves as cofactor. In terms of processing, is synthesized initially as an inactive proenzyme, which is activated by self-cleavage at a specific serine bond to produce a beta-subunit with a hydroxyl group at its C-terminus and an alpha-subunit with a pyruvoyl group at its N-terminus.

The protein resides in the cytoplasm. The catalysed reaction is L-aspartate + H(+) = beta-alanine + CO2. The protein operates within cofactor biosynthesis; (R)-pantothenate biosynthesis; beta-alanine from L-aspartate: step 1/1. Catalyzes the pyruvoyl-dependent decarboxylation of aspartate to produce beta-alanine. The chain is Aspartate 1-decarboxylase from Bordetella parapertussis (strain 12822 / ATCC BAA-587 / NCTC 13253).